The sequence spans 168 residues: MQRVGSSFSTGQREPGENRVASRCPSVALAERNQVATLPVRLLRDEVQGNGCEQPSFQIKVDAQGFAPEDLVVRIDGQNLTVTGQRQHESNDPSRGRYRMEQSVHRQMQLPPTLDPAAMTCSLTPSGHLWLRGQNKCLPPPEAQTGQSQKPRRGGPKSSLQNESVKNP.

A compositionally biased stretch (polar residues) spans 1 to 12; it reads MQRVGSSFSTGQ. Disordered stretches follow at residues 1-25, 83-104, and 129-168; these read MQRVGSSFSTGQREPGENRVASRCP, TGQRQHESNDPSRGRYRMEQSV, and LWLRGQNKCLPPPEAQTGQSQKPRRGGPKSSLQNESVKNP. The region spanning 38 to 151 is the sHSP domain; the sequence is LPVRLLRDEV…EAQTGQSQKP (114 aa). Basic and acidic residues predominate over residues 86–104; sequence RQHESNDPSRGRYRMEQSV. The segment covering 158 to 168 has biased composition (polar residues); the sequence is SSLQNESVKNP.

This sequence belongs to the small heat shock protein (HSP20) family. Testis specific.

It localises to the cytoplasm. It is found in the nucleus. This chain is Heat shock protein beta-9 (Hspb9), found in Mus musculus (Mouse).